The chain runs to 301 residues: Homoserine O-acetyltransferase (301 aa).

Cys-142 functions as the Acyl-thioester intermediate in the catalytic mechanism. Residues Lys-163 and Ser-192 each coordinate substrate. Catalysis depends on His-235, which acts as the Proton acceptor. Glu-237 is an active-site residue. Arg-249 is a substrate binding site.

This sequence belongs to the MetA family.

It is found in the cytoplasm. It carries out the reaction L-homoserine + acetyl-CoA = O-acetyl-L-homoserine + CoA. It participates in amino-acid biosynthesis; L-methionine biosynthesis via de novo pathway; O-acetyl-L-homoserine from L-homoserine: step 1/1. Its function is as follows. Transfers an acetyl group from acetyl-CoA to L-homoserine, forming acetyl-L-homoserine. The protein is Homoserine O-acetyltransferase of Bacillus anthracis (strain A0248).